Consider the following 156-residue polypeptide: 6,7-dimethyl-8-ribityllumazine synthase (156 aa).

Residues tryptophan 33, 64–66 (SVE), and 86–88 (VIL) contribute to the 5-amino-6-(D-ribitylamino)uracil site. 91-92 (ET) is a (2S)-2-hydroxy-3-oxobutyl phosphate binding site. Histidine 94 serves as the catalytic Proton donor. Residue isoleucine 119 coordinates 5-amino-6-(D-ribitylamino)uracil. Arginine 133 serves as a coordination point for (2S)-2-hydroxy-3-oxobutyl phosphate.

Belongs to the DMRL synthase family.

The catalysed reaction is (2S)-2-hydroxy-3-oxobutyl phosphate + 5-amino-6-(D-ribitylamino)uracil = 6,7-dimethyl-8-(1-D-ribityl)lumazine + phosphate + 2 H2O + H(+). It participates in cofactor biosynthesis; riboflavin biosynthesis; riboflavin from 2-hydroxy-3-oxobutyl phosphate and 5-amino-6-(D-ribitylamino)uracil: step 1/2. Catalyzes the formation of 6,7-dimethyl-8-ribityllumazine by condensation of 5-amino-6-(D-ribitylamino)uracil with 3,4-dihydroxy-2-butanone 4-phosphate. This is the penultimate step in the biosynthesis of riboflavin. This is 6,7-dimethyl-8-ribityllumazine synthase from Tropheryma whipplei (strain TW08/27) (Whipple's bacillus).